The chain runs to 266 residues: Glutamate racemase (266 aa).

Substrate is bound by residues 9-10 (DS) and 41-42 (YG). Residue Cys72 is the Proton donor/acceptor of the active site. Position 73–74 (73–74 (NT)) interacts with substrate. Cys184 functions as the Proton donor/acceptor in the catalytic mechanism. 185–186 (TH) contributes to the substrate binding site.

Belongs to the aspartate/glutamate racemases family.

It carries out the reaction L-glutamate = D-glutamate. The protein operates within cell wall biogenesis; peptidoglycan biosynthesis. Functionally, provides the (R)-glutamate required for cell wall biosynthesis. The chain is Glutamate racemase from Staphylococcus carnosus (strain TM300).